Reading from the N-terminus, the 336-residue chain is Cell division protein ZipA (336 aa).

Residues 1–2 (ME) are Periplasmic-facing. A helical membrane pass occupies residues 3 to 23 (LHILFFILAGLLIAVLIGFSL). The Cytoplasmic portion of the chain corresponds to 24 to 336 (WSARREKSRI…SRQAYLARVS (313 aa)).

The protein belongs to the ZipA family. In terms of assembly, interacts with FtsZ via their C-terminal domains.

It localises to the cell inner membrane. Essential cell division protein that stabilizes the FtsZ protofilaments by cross-linking them and that serves as a cytoplasmic membrane anchor for the Z ring. Also required for the recruitment to the septal ring of downstream cell division proteins. The protein is Cell division protein ZipA of Actinobacillus pleuropneumoniae serotype 5b (strain L20).